The sequence spans 122 residues: Vitelline membrane protein Vm32E (122 aa).

Residues methionine 1 to alanine 19 form the signal peptide. One can recognise a VM domain in the interval serine 40–threonine 79.

The protein belongs to the vitelline membrane family.

The protein localises to the secreted. Functionally, major early eggshell protein. In Drosophila persimilis (Fruit fly), this protein is Vitelline membrane protein Vm32E.